The chain runs to 189 residues: Interferon alpha-F (189 aa).

Residues 1–23 (MAPAWSLLLALLLLSCNAICSLG) form the signal peptide. Disulfide bonds link C24–C122 and C52–C162.

It belongs to the alpha/beta interferon family.

It localises to the secreted. Its function is as follows. Produced by macrophages, IFN-alpha have antiviral activities. Interferon stimulates the production of two enzymes: a protein kinase and an oligoadenylate synthetase. This Bos taurus (Bovine) protein is Interferon alpha-F (IFNAF).